Here is a 366-residue protein sequence, read N- to C-terminus: Histidinol-phosphate aminotransferase (366 aa).

The residue at position 231 (Lys-231) is an N6-(pyridoxal phosphate)lysine.

It belongs to the class-II pyridoxal-phosphate-dependent aminotransferase family. Histidinol-phosphate aminotransferase subfamily. Requires pyridoxal 5'-phosphate as cofactor.

The catalysed reaction is L-histidinol phosphate + 2-oxoglutarate = 3-(imidazol-4-yl)-2-oxopropyl phosphate + L-glutamate. Its pathway is amino-acid biosynthesis; L-histidine biosynthesis; L-histidine from 5-phospho-alpha-D-ribose 1-diphosphate: step 7/9. The polypeptide is Histidinol-phosphate aminotransferase (Halobacterium salinarum (strain ATCC 29341 / DSM 671 / R1)).